A 584-amino-acid polypeptide reads, in one-letter code: A-type ATP synthase subunit A (584 aa).

Residue 233–240 coordinates ATP; that stretch reads GPFGSGKT.

Belongs to the ATPase alpha/beta chains family. In terms of assembly, has multiple subunits with at least A(3), B(3), C, D, E, F, H, I and proteolipid K(x).

It localises to the cell membrane. It carries out the reaction ATP + H2O + 4 H(+)(in) = ADP + phosphate + 5 H(+)(out). Component of the A-type ATP synthase that produces ATP from ADP in the presence of a proton gradient across the membrane. The A chain is the catalytic subunit. The protein is A-type ATP synthase subunit A of Methanothermobacter thermautotrophicus (strain ATCC 29096 / DSM 1053 / JCM 10044 / NBRC 100330 / Delta H) (Methanobacterium thermoautotrophicum).